Here is a 201-residue protein sequence, read N- to C-terminus: E3 ubiquitin-protein ligase MIR1 (201 aa).

Residues 1 to 58 (MDSTGEFCWICHQPEGPLKRFCGCKGSCAVSHQDCLRGWLETSRRQTCALCGTPYSMK) form an RING-CH-type zinc finger. Topologically, residues 1–81 (MDSTGEFCWI…EEVLAAMEAC (81 aa)) are cytoplasmic. Zn(2+) contacts are provided by Cys-8, Cys-11, Cys-22, Cys-24, His-32, Cys-35, Cys-48, and Cys-51. The interval 52–79 (GTPYSMKWKTKPLREWTWGEEEVLAAME) is DIRT. Residues 82 to 102 (LPLVLIPLAVLMIVMGTWLLV) traverse the membrane as a helical segment. The Extracellular segment spans residues 103–113 (NHNGFLSPRMQ). A helical membrane pass occupies residues 114–134 (VVLVVIVLLAMIVFSASASYV). Residues 135–201 (MVEGPGCLDT…RLGCVRLCCV (67 aa)) are Cytoplasmic-facing.

As to quaternary structure, interacts with host UBE2J2.

It is found in the host endoplasmic reticulum membrane. It carries out the reaction [E2 ubiquitin-conjugating enzyme]-S-ubiquitinyl-L-cysteine + [acceptor protein]-L-cysteine = [E2 ubiquitin-conjugating enzyme]-L-cysteine + [acceptor protein]-S-ubiquitinyl-L-cysteine.. It participates in protein modification; protein ubiquitination. E3 ubiquitin-protein ligase that mediates ubiquitination of host surface class I (MHC-I) H-2D(b)/H2-D1 and H-2K(b)/H2-K1 molecules before they exit the endoplasmic reticulum, leading to their degradation by the endoplasmic reticulum-associated degradation (ERAD) system, thus blocking the immune detection of virus-infected cells. Mediates ubiquitination of lysine, as well as serine and threonine residues present in the cytoplasmic tail of surface class I molecules. Promotes ubiquitination of hydroxylated serine or threonine residues via ester bonds instead of the classical isopeptide linkage. This Murid herpesvirus 4 (MuHV-4) protein is E3 ubiquitin-protein ligase MIR1 (K3).